The chain runs to 188 residues: Preprocaerulein type-1 (188 aa).

An N-terminal signal peptide occupies residues 1 to 26 (MFKGILLCVLFAVLSANPLSQPEGFA). Residues 27–170 (DEERDVRGLA…ANDERRFADG (144 aa)) constitute a propeptide that is removed on maturation. The interval 152 to 188 (LGGSPQQREANDERRFADGQQDYTGWMDFGRRNGEDD) is disordered. Tyrosine 174 is subject to Sulfotyrosine. Phenylalanine 180 carries the post-translational modification Phenylalanine amide. The propeptide occupies 184–188 (NGEDD).

It belongs to the gastrin/cholecystokinin family. Expressed by the skin glands.

The protein localises to the secreted. Its function is as follows. The pharmacological activities of caerulein are quite similar to the physiological activities of gastrin and related peptides. This chain is Preprocaerulein type-1, found in Xenopus laevis (African clawed frog).